We begin with the raw amino-acid sequence, 363 residues long: MASDAASLVLGIETTCDETAAAVIERRADGSGQILSNIVHSQIEDHAPFGGVVPEIAARAHVDLLDGIIARAMREADVGFAQLSGVAAAAGPGLIGGVIVGLTTAKAIALVHETPLIAVNHLEAHALTPRLTHALEFPYCLFLASGGHTQIVAVLGVGDYVRLGTTVDDAMGEAFDKVAKMLGLPYPGGPQVERAAETGDADRFAFPRPMLGRAEPNFSLSGLKTAVRNEASRLMPLERQDIADLCAGFQAAVLDATADRLKVGLALFRDRFGPPHALVAAGGVAANQAIRRALHDVAVAAGTVLMMPPPKLCTDNGAMIAWAGAERLALGLTDPLDTAPRARWLLDANIATPAKFANTRAGF.

Residues His-121 and His-125 each contribute to the Fe cation site. Substrate-binding positions include 143 to 147, Asp-176, Gly-189, and Asn-287; that span reads LASGG. Residue Asp-315 participates in Fe cation binding.

It belongs to the KAE1 / TsaD family. Requires Fe(2+) as cofactor.

The protein localises to the cytoplasm. The enzyme catalyses L-threonylcarbamoyladenylate + adenosine(37) in tRNA = N(6)-L-threonylcarbamoyladenosine(37) in tRNA + AMP + H(+). Functionally, required for the formation of a threonylcarbamoyl group on adenosine at position 37 (t(6)A37) in tRNAs that read codons beginning with adenine. Is involved in the transfer of the threonylcarbamoyl moiety of threonylcarbamoyl-AMP (TC-AMP) to the N6 group of A37, together with TsaE and TsaB. TsaD likely plays a direct catalytic role in this reaction. This Rhodopseudomonas palustris (strain BisA53) protein is tRNA N6-adenosine threonylcarbamoyltransferase.